We begin with the raw amino-acid sequence, 121 residues long: Nitrogenase-stabilizing/protective protein NifW (121 aa).

It belongs to the NifW family. In terms of assembly, homotrimer; associates with NifD.

May protect the nitrogenase Fe-Mo protein from oxidative damage. The chain is Nitrogenase-stabilizing/protective protein NifW from Methylacidiphilum infernorum (isolate V4) (Methylokorus infernorum (strain V4)).